We begin with the raw amino-acid sequence, 20 residues long: Cathepsin L-like cysteine proteinase (20 aa).

Belongs to the peptidase C1 family.

The protein localises to the lysosome. Its function is as follows. Thiol protease. This Fasciola hepatica (Liver fluke) protein is Cathepsin L-like cysteine proteinase.